Here is a 263-residue protein sequence, read N- to C-terminus: N-acyl homoserine lactonase AttM (263 aa).

Zn(2+) contacts are provided by His103, His105, Asp107, His108, His180, Asp202, and His247.

Belongs to the metallo-beta-lactamase superfamily. It depends on Zn(2+) as a cofactor.

The catalysed reaction is an N-acyl-L-homoserine lactone + H2O = an N-acyl-L-homoserine + H(+). This chain is N-acyl homoserine lactonase AttM, found in Azorhizobium caulinodans (strain ATCC 43989 / DSM 5975 / JCM 20966 / LMG 6465 / NBRC 14845 / NCIMB 13405 / ORS 571).